The chain runs to 480 residues: MKVLSVSSEVFPLIKTGGLADVAGALPGALNPHGIETKTLIPGYPAVMKVIRNPVARLEFADLLGEKATVFEVEHSGMSFLVLDAPAYYNRTGGPYVDATGKDYPDNWQRFAALSLAGAEIAAGQMPGWQPDLVHVHDWQSALVPVYMRYAPTPELPSVLTIHNIAFQGQFGPSIFPGLRLPAHAYSMQGIEYYGDIGFLKGGLQTAHALTTVSPSYAGEILTPEFGMGLEGVIASRAASLHGIVNGIDDGIWNPETDPMIARTYGASTLKDRAINRKQVVEHFGLDDDDGPIFCVVSRLTWQKGMDLLASISSEIVAMGGKLAILGAGDAALEGALFAAAGRHRGRVGVSAGYNEAMSHLMQAGCDAIIIPSRFEPCGLTQLYGLRYGCVPIVARTGGLNDTIIDANHAALQAKVATGIQFSPVTAEGLLQAIRRAIYLFQDRKVWTQMQKQGMKSDVSWGKSAERYAALYSRLVSRGA.

K15 contacts ADP-alpha-D-glucose.

Belongs to the glycosyltransferase 1 family. Bacterial/plant glycogen synthase subfamily.

It catalyses the reaction [(1-&gt;4)-alpha-D-glucosyl](n) + ADP-alpha-D-glucose = [(1-&gt;4)-alpha-D-glucosyl](n+1) + ADP + H(+). It functions in the pathway glycan biosynthesis; glycogen biosynthesis. Synthesizes alpha-1,4-glucan chains using ADP-glucose. In Rhizobium rhizogenes (strain K84 / ATCC BAA-868) (Agrobacterium radiobacter), this protein is Glycogen synthase.